Here is a 273-residue protein sequence, read N- to C-terminus: WIMGHMVNAIYQIQEFVSLGANSIEFDINFDTDANPIYTYHGVPCDCFRSCLHYEYISDFLKALREHTLPGNPKYKENLVLFVFDLKTNSLYDSQAYTAGQKLAENIFQYYWANGEGMPVSGYLVISIPNLQHYDLIKGFRETIKAKGHNELLDRVGYDFSANDNIPDVENAYKKVGVVNHVWQSDGITNCISRGLTRAKEAVSERDGGGVINKVYVWTIDKYQSMRDALDANVDGIMTNYPNILVEVLKEDAYKDRFRLAKNYDDPFVTFEG.

Residue H5 is part of the active site. Positions 25 and 27 each coordinate Mg(2+). Residue H41 is the Nucleophile of the active site. Intrachain disulfides connect C45/C51 and C47/C191. Mg(2+) is bound at residue D85.

This sequence belongs to the arthropod phospholipase D family. Class II subfamily. The cofactor is Mg(2+). Expressed by the venom gland.

Its subcellular location is the secreted. The catalysed reaction is an N-(acyl)-sphingosylphosphocholine = an N-(acyl)-sphingosyl-1,3-cyclic phosphate + choline. It carries out the reaction an N-(acyl)-sphingosylphosphoethanolamine = an N-(acyl)-sphingosyl-1,3-cyclic phosphate + ethanolamine. It catalyses the reaction a 1-acyl-sn-glycero-3-phosphocholine = a 1-acyl-sn-glycero-2,3-cyclic phosphate + choline. The enzyme catalyses a 1-acyl-sn-glycero-3-phosphoethanolamine = a 1-acyl-sn-glycero-2,3-cyclic phosphate + ethanolamine. In terms of biological role, dermonecrotic toxins cleave the phosphodiester linkage between the phosphate and headgroup of certain phospholipids (sphingolipid and lysolipid substrates), forming an alcohol (often choline) and a cyclic phosphate. This toxin acts on sphingomyelin (SM). It may also act on ceramide phosphoethanolamine (CPE), lysophosphatidylcholine (LPC) and lysophosphatidylethanolamine (LPE), but not on lysophosphatidylserine (LPS), and lysophosphatidylglycerol (LPG). It acts by transphosphatidylation, releasing exclusively cyclic phosphate products as second products. Induces dermonecrosis, hemolysis, increased vascular permeability, edema, inflammatory response, and platelet aggregation. This Loxosceles apachea (Apache recluse spider) protein is Dermonecrotic toxin LapSicTox-alphaII1.